The primary structure comprises 777 residues: Histone-lysine N-methyltransferase set9 (777 aa).

The region spanning 117 to 231 (CPFEVNATNR…VGEEITVTYS (115 aa)) is the SET domain. Disordered stretches follow at residues 263-414 (AVQK…ILSP) and 682-718 (RMGS…QGQY). A compositionally biased stretch (polar residues) spans 291-301 (TALQASRTPSV). Positions 323–337 (TSTTDSAAQGAGADG) are enriched in low complexity. 2 stretches are compositionally biased toward polar residues: residues 371-405 (TAPS…QGSE) and 688-698 (KQGSSAPSTKG).

This sequence belongs to the class V-like SAM-binding methyltransferase superfamily. Histone-lysine methyltransferase family. Suvar4-20 subfamily.

The protein resides in the nucleus. Its subcellular location is the chromosome. The enzyme catalyses L-lysyl(20)-[histone H4] + 3 S-adenosyl-L-methionine = N(6),N(6),N(6)-trimethyl-L-lysyl(20)-[histone H4] + 3 S-adenosyl-L-homocysteine + 3 H(+). Histone methyltransferase that trimethylates 'Lys-20' of histone H4 to form H4K20me3. The chain is Histone-lysine N-methyltransferase set9 (hlm-1) from Neurospora crassa (strain ATCC 24698 / 74-OR23-1A / CBS 708.71 / DSM 1257 / FGSC 987).